The sequence spans 96 residues: MRHYEVMVILDPDLEERAVSPLIENFLSVVREGDGKVEKVDTWGRRRLAYEIKKKPEGIYSVIDLQAEPAVVKELDRQMNLNESVLRTKVLRPEVH.

This sequence belongs to the bacterial ribosomal protein bS6 family.

In terms of biological role, binds together with bS18 to 16S ribosomal RNA. The chain is Small ribosomal subunit protein bS6 from Streptomyces griseus subsp. griseus (strain JCM 4626 / CBS 651.72 / NBRC 13350 / KCC S-0626 / ISP 5235).